Reading from the N-terminus, the 628-residue chain is Probable alpha-L-arabinofuranosidase A (628 aa).

The signal sequence occupies residues 1-25 (MVAFSALSGVSALSLLLCLVQHAHG). N-linked (GlcNAc...) asparagine glycosylation is found at Asn-36, Asn-51, Asn-74, Asn-152, Asn-171, Asn-260, Asn-359, and Asn-493.

This sequence belongs to the glycosyl hydrolase 51 family.

The protein localises to the secreted. It catalyses the reaction Hydrolysis of terminal non-reducing alpha-L-arabinofuranoside residues in alpha-L-arabinosides.. The protein operates within glycan metabolism; L-arabinan degradation. In terms of biological role, alpha-L-arabinofuranosidase involved in the degradation of arabinoxylan, a major component of plant hemicellulose. Acts only on small linear 1,5-alpha-linked L-arabinofuranosyl oligosaccharides. The chain is Probable alpha-L-arabinofuranosidase A (abfA) from Aspergillus awamori (Black koji mold).